The primary structure comprises 1066 residues: Pumilio homolog 2 (1066 aa).

Residues 1–260 are interaction with SNAPIN; it reads MNHDFQALAL…ATVGLFDYNS (260 aa). Residues Ser-67, Ser-82, and Ser-102 each carry the phosphoserine modification. A disordered region spans residues 106–204; the sequence is KLDSRFRKGN…NPSEGLGPLP (99 aa). The segment covering 119–133 has biased composition (basic and acidic residues); that stretch reads RDAETDGPEKGDQKG. Phosphoserine occurs at positions 136, 178, and 182. Phosphothreonine is present on residues Thr-184 and Thr-396. The tract at residues 494–553 is disordered; sequence STNGLFRPIGTQPPQQQQQQPSTNLQSNSFYGSSSLTNSSQSSSLFSHGPGQPGSTSLGF. The span at 505–514 shows a compositional bias: low complexity; the sequence is QPPQQQQQQP. A compositionally biased stretch (polar residues) spans 515 to 525; that stretch reads STNLQSNSFYG. A compositionally biased stretch (low complexity) spans 526 to 540; the sequence is SSSLTNSSQSSSLFS. 2 positions are modified to phosphoserine: Ser-587 and Ser-592. Residues 620–650 are disordered; it reads SPIGMPLPSQTPGHSLTPPPSLSSHGSSSSL. Residues 630–650 show a composition bias toward low complexity; it reads TPGHSLTPPPSLSSHGSSSSL. Arg-674 carries the omega-N-methylarginine modification. 2 positions are modified to phosphoserine: Ser-684 and Ser-700. Residues 706–1048 form the PUM-HD domain; that stretch reads GRSRLLEDFR…HILAKLEKYY (343 aa). 8 Pumilio repeats span residues 726-761, 762-797, 798-835, 836-871, 872-907, 908-943, 944-979, and 983-1022; these read DLIGHIVEFSQDQHGSRFIQQKLERATPAERQMVFN, EILQAAYQLMTDVFGNYVIQKFFEFGSLDQKLALAT, RIRGHVLPLALQMYGCRVIQKALESISSDQQVISEMVK, ELDGHVLKCVKDQNGNHVVQKCIECVQPQSLQFIID, AFKGQVFVLSTHPYGCRVIQRILEHCTAEQTLPILE, ELHQHTEQLVQDQYGNYVIQHVLEHGRPEDKSKIVS, EIRGKVLALSQHKFASNVVEKCVTHASRAERALLID, and CQNDGPHSALYTMMKDQYANYVVQKMIDMAEPAQRKIIMH. Residues 741–745 form an adenine-nucleotide binding in RNA target region; that stretch reads SRFIQ. The segment at 777-781 is uracil-nucleotide binding in RNA target; sequence NYVIQ. The segment at 813–817 is adenine-nucleotide binding in RNA target; the sequence is CRVIQ. The segment at 851–855 is non-specific-nucleotide binding in RNA target; sequence NHVVQ. Positions 887 to 891 are adenine-nucleotide binding in RNA target; sequence CRVIQ. A uracil-nucleotide binding in RNA target region spans residues 923–927; it reads NYVIQ. The segment at 959–963 is guanine-nucleotide binding in RNA target; the sequence is SNVVE. The uracil-nucleotide binding in RNA target stretch occupies residues 1002 to 1006; it reads NYVVQ.

As to quaternary structure, homodimer; homodimerizes in vitro. Interacts with DAZ1, DAZL and NANOS1 via its pumilio repeats. Interacts with NANOS3. Interacts with SNAPIN. Recruits the CCR4-POP2-NOT deadenylase leading to translational inhibition and mRNA degradation. Interacts with DDX20. In case of viral infection, interacts with DHX58. Interacts with TRIM71 (via NHL repeats) in an RNA-dependent manner. As to expression, expressed in male germ cells of adult testis (at protein level). Highly expressed in testis and ovary. Predominantly expressed in stem cells and germ cells. Expressed at lower level in brain, heart, kidney, liver, muscle, placenta, intestine and stomach Expressed in cerebellum, corpus callosum, caudate nucleus, hippocampus, medulla oblongata and putamen. Expressed in all fetal tissues tested.

It is found in the cytoplasm. It localises to the cytoplasmic granule. Its subcellular location is the perinuclear region. Sequence-specific RNA-binding protein that acts as a post-transcriptional repressor by binding the 3'-UTR of mRNA targets. Binds to an RNA consensus sequence, the Pumilio Response Element (PRE), 5'-UGUANAUA-3', that is related to the Nanos Response Element (NRE) (, PubMed:21397187). Mediates post-transcriptional repression of transcripts via different mechanisms: acts via direct recruitment of the CCR4-POP2-NOT deadenylase leading to translational inhibition and mRNA degradation. Also mediates deadenylation-independent repression by promoting accessibility of miRNAs. Acts as a post-transcriptional repressor of E2F3 mRNAs by binding to its 3'-UTR and facilitating miRNA regulation. Plays a role in cytoplasmic sensing of viral infection. Represses a program of genes necessary to maintain genomic stability such as key mitotic, DNA repair and DNA replication factors. Its ability to repress those target mRNAs is regulated by the lncRNA NORAD (non-coding RNA activated by DNA damage) which, due to its high abundance and multitude of PUMILIO binding sites, is able to sequester a significant fraction of PUM1 and PUM2 in the cytoplasm. May regulate DCUN1D3 mRNA levels. May support proliferation and self-renewal of stem cells. Binds specifically to miRNA MIR199A precursor, with PUM1, regulates miRNA MIR199A expression at a postranscriptional level. This Homo sapiens (Human) protein is Pumilio homolog 2 (PUM2).